The sequence spans 48 residues: Large ribosomal subunit protein eL40 (48 aa).

Belongs to the eukaryotic ribosomal protein eL40 family.

This Methanosphaera stadtmanae (strain ATCC 43021 / DSM 3091 / JCM 11832 / MCB-3) protein is Large ribosomal subunit protein eL40.